A 565-amino-acid polypeptide reads, in one-letter code: MEVHAEQLQKPPVVRGARACTTCRAAKMKCVGAEDGQRQCQRCKRANVQCIFEKHRRGRKPGSKLSEASKMLRRLEKGLNSAKSKAFSIDARHSSSYRDSHPSLGEPDDRYTNGVRSHPYSPPNGQFVSNLPPLNLPSYPDAASEYTASSTSSRTLDANDDEGDSASDRAEDNIFPANFIQRERRRNSFFRTILNPEDAPASGPSSVRCSETYSPPQSPAAPAGLNDPVSAGIVDEEHAKVLFDLIFLRLNPFINLFDPSLHTVSYVRNKSPFLFTVLIMAGCKFFRPELFKQCQKLADEYAVQAFACLTYWKGHDDNRTSTWTFVGYACRMRVEIGLNRYVPNVPSNETELQRLERRNRERTYLVLFIHDRSLSTQTGRHWMLPEDDFIRHSDRWHESSGGSVRPEDVIVAAFVQLRHIAAETTEIFQRGVDMSSEVVLRSCNSQLTQWNETWHREMQQAGGGAFHFSFLSLFRLYVRLFTNSLALRESSNRATPNIQALSACYTSAVDSLKVVSEFARMNVLRYGQETITMMSAYAALYLLSLLRNTLRYCSCTMAQLKMRIL.

Residues 20 to 50 (CTTCRAAKMKCVGAEDGQRQCQRCKRANVQC) constitute a DNA-binding region (zn(2)-C6 fungal-type). 2 disordered regions span residues 82 to 170 (AKSK…SDRA) and 195 to 224 (NPEDAPASGPSSVRCSETYSPPQSPAAPAG). Residues 90–111 (DARHSSSYRDSHPSLGEPDDRY) show a composition bias toward basic and acidic residues. Low complexity predominate over residues 129 to 155 (SNLPPLNLPSYPDAASEYTASSTSSRT). Polar residues predominate over residues 203 to 215 (GPSSVRCSETYSP).

It localises to the nucleus. The sequence is that of Protein priB (priB) from Lentinula edodes (Shiitake mushroom).